The primary structure comprises 98 residues: Beta-elicitin cinnamomin (98 aa).

3 cysteine pairs are disulfide-bonded: Cys-3-Cys-71, Cys-27-Cys-56, and Cys-51-Cys-95. A Beak-like motif 1 (ligand binding) motif is present at residues 33–42 (YSMLTATALP). The short motif at 72 to 83 (DLTVPTSGLVLD) is the Beak-like motif 2 (ligand binding) element.

Belongs to the elicitin family.

The protein localises to the secreted. In terms of biological role, induces local and distal defense responses (incompatible hypersensitive reaction) in plants from the solanaceae and cruciferae families. Elicits leaf necrosis and causes the accumulation of pathogenesis-related proteins. Might interact with the lipidic molecules of the plasma membrane. Elicitins are able to load, carry, and transfer sterols between membranes. The polypeptide is Beta-elicitin cinnamomin (Phytophthora cinnamomi (Cinnamon fungus)).